Consider the following 122-residue polypeptide: MPTQPSRDLQTFPNPKPGRPFEIAMECPEFTCVCPMTGQPDFATIRLRYVPAERCVELKSLKLYLWSFRNEGTFHEAVTNRICDDLVAALAPRWIEVVGDFAVRGGIHTVVTARHGERPAGV.

Cysteine 34 (thioimide intermediate) is an active-site residue. Aspartate 41 (proton donor) is an active-site residue. Residues 56 to 58 (VEL) and 75 to 76 (HE) each bind substrate.

Belongs to the GTP cyclohydrolase I family. QueF type 1 subfamily.

It is found in the cytoplasm. The enzyme catalyses 7-aminomethyl-7-carbaguanine + 2 NADP(+) = 7-cyano-7-deazaguanine + 2 NADPH + 3 H(+). It participates in tRNA modification; tRNA-queuosine biosynthesis. Its function is as follows. Catalyzes the NADPH-dependent reduction of 7-cyano-7-deazaguanine (preQ0) to 7-aminomethyl-7-deazaguanine (preQ1). This Anaeromyxobacter dehalogenans (strain 2CP-1 / ATCC BAA-258) protein is NADPH-dependent 7-cyano-7-deazaguanine reductase.